The following is a 492-amino-acid chain: Probable malate:quinone oxidoreductase (492 aa).

Belongs to the MQO family. The cofactor is FAD.

The enzyme catalyses (S)-malate + a quinone = a quinol + oxaloacetate. The protein operates within carbohydrate metabolism; tricarboxylic acid cycle; oxaloacetate from (S)-malate (quinone route): step 1/1. In Methylobacillus flagellatus (strain ATCC 51484 / DSM 6875 / VKM B-1610 / KT), this protein is Probable malate:quinone oxidoreductase.